Here is a 293-residue protein sequence, read N- to C-terminus: 1D-myo-inositol 2-acetamido-2-deoxy-alpha-D-glucopyranoside deacetylase (293 aa).

Zn(2+)-binding residues include H16, D19, and H156.

It belongs to the MshB deacetylase family. Requires Zn(2+) as cofactor.

The enzyme catalyses 1D-myo-inositol 2-acetamido-2-deoxy-alpha-D-glucopyranoside + H2O = 1D-myo-inositol 2-amino-2-deoxy-alpha-D-glucopyranoside + acetate. Its function is as follows. Catalyzes the deacetylation of 1D-myo-inositol 2-acetamido-2-deoxy-alpha-D-glucopyranoside (GlcNAc-Ins) in the mycothiol biosynthesis pathway. This is 1D-myo-inositol 2-acetamido-2-deoxy-alpha-D-glucopyranoside deacetylase from Nakamurella multipartita (strain ATCC 700099 / DSM 44233 / CIP 104796 / JCM 9543 / NBRC 105858 / Y-104) (Microsphaera multipartita).